We begin with the raw amino-acid sequence, 610 residues long: UvrABC system protein C (610 aa).

The region spanning 16–94 (SQPGVYRMYD…IKLYQPRYNV (79 aa)) is the GIY-YIG domain. Residues 204–239 (DQVLNQLVARMEQASGDLRFEEAGRLRDQIQAVRRV) enclose the UVR domain.

This sequence belongs to the UvrC family. In terms of assembly, interacts with UvrB in an incision complex.

It localises to the cytoplasm. The UvrABC repair system catalyzes the recognition and processing of DNA lesions. UvrC both incises the 5' and 3' sides of the lesion. The N-terminal half is responsible for the 3' incision and the C-terminal half is responsible for the 5' incision. This is UvrABC system protein C from Erwinia tasmaniensis (strain DSM 17950 / CFBP 7177 / CIP 109463 / NCPPB 4357 / Et1/99).